A 1392-amino-acid chain; its full sequence is DNA-directed RNA polymerase subunit beta' (1392 aa).

Residues Cys70, Cys72, Cys85, and Cys88 each coordinate Zn(2+). Residues Asp460, Asp462, and Asp464 each coordinate Mg(2+). Positions 810, 884, 891, and 894 each coordinate Zn(2+).

Belongs to the RNA polymerase beta' chain family. In terms of assembly, the RNAP catalytic core consists of 2 alpha, 1 beta, 1 beta' and 1 omega subunit. When a sigma factor is associated with the core the holoenzyme is formed, which can initiate transcription. Requires Mg(2+) as cofactor. Zn(2+) is required as a cofactor.

The enzyme catalyses RNA(n) + a ribonucleoside 5'-triphosphate = RNA(n+1) + diphosphate. DNA-dependent RNA polymerase catalyzes the transcription of DNA into RNA using the four ribonucleoside triphosphates as substrates. This Geobacter metallireducens (strain ATCC 53774 / DSM 7210 / GS-15) protein is DNA-directed RNA polymerase subunit beta'.